The following is a 372-amino-acid chain: tRNA-specific 2-thiouridylase MnmA (372 aa).

ATP-binding positions include 6–13 and Leu32; that span reads AMSGGVDS. The Nucleophile role is filled by Cys101. Cysteines 101 and 193 form a disulfide. Gly125 lines the ATP pocket. The interval 143 to 145 is interaction with tRNA; it reads KDQ. Cys193 serves as the catalytic Cysteine persulfide intermediate.

It belongs to the MnmA/TRMU family.

The protein localises to the cytoplasm. It catalyses the reaction S-sulfanyl-L-cysteinyl-[protein] + uridine(34) in tRNA + AH2 + ATP = 2-thiouridine(34) in tRNA + L-cysteinyl-[protein] + A + AMP + diphosphate + H(+). In terms of biological role, catalyzes the 2-thiolation of uridine at the wobble position (U34) of tRNA, leading to the formation of s(2)U34. This Corynebacterium kroppenstedtii (strain DSM 44385 / JCM 11950 / CIP 105744 / CCUG 35717) protein is tRNA-specific 2-thiouridylase MnmA.